The chain runs to 139 residues: MKKSTLINSGISYLVATLGHTDEITICDAGLPIPDHVQRIDLALTHGVPSFLDTVRVILSESQIEGVIIAEEFSDVSPVLHEALLKELSKESEETGKSIEIKYVSHEAFKARTEQSRAVVRTGECTPYANVIFQAGVVF.

The Proton donor role is filled by histidine 20. Substrate contacts are provided by residues aspartate 28, histidine 106, and tyrosine 128–asparagine 130.

The protein belongs to the RbsD / FucU family. RbsD subfamily. In terms of assembly, homodecamer.

It localises to the cytoplasm. The enzyme catalyses beta-D-ribopyranose = beta-D-ribofuranose. It functions in the pathway carbohydrate metabolism; D-ribose degradation; D-ribose 5-phosphate from beta-D-ribopyranose: step 1/2. Functionally, catalyzes the interconversion of beta-pyran and beta-furan forms of D-ribose. In Vibrio parahaemolyticus serotype O3:K6 (strain RIMD 2210633), this protein is D-ribose pyranase.